The primary structure comprises 308 residues: Ribosomal RNA large subunit methyltransferase F (308 aa).

This sequence belongs to the methyltransferase superfamily. METTL16/RlmF family.

The protein localises to the cytoplasm. The enzyme catalyses adenosine(1618) in 23S rRNA + S-adenosyl-L-methionine = N(6)-methyladenosine(1618) in 23S rRNA + S-adenosyl-L-homocysteine + H(+). In terms of biological role, specifically methylates the adenine in position 1618 of 23S rRNA. This chain is Ribosomal RNA large subunit methyltransferase F, found in Escherichia fergusonii (strain ATCC 35469 / DSM 13698 / CCUG 18766 / IAM 14443 / JCM 21226 / LMG 7866 / NBRC 102419 / NCTC 12128 / CDC 0568-73).